A 1252-amino-acid chain; its full sequence is Putative late blight resistance protein homolog R1B-11 (1252 aa).

Residues 543-566 are a coiled coil; sequence RYSDSLAFLKNQLQVIQTEFESLQ. 2 consecutive NB-ARC domains span residues 684–736 and 786–830; these read SVRR…RSRI and SYHV…SSEG. 7 LRR repeats span residues 955–980, 998–1026, 1077–1100, 1103–1125, 1126–1149, 1187–1212, and 1213–1236; these read FKFLKVLDLEHQIVIDFIPTELPYLR, LWNLETLILKRRSAATYKTLLLPSTVWDM, LKHLEVLELYRVEFGDHGEWKVSS, FPKLKILKLDYVSLMKWIVADDA, FPNLEQLVSLGCQNLMEIPSCFTD, LVIIKKLVLKFDRFHGDEEIRKRLSS, and LPGIKSISINRGEKKLTVGGDVDA. The region spanning 1188-1252 is the HMA domain; that stretch reads VIIKKLVLKF…VGKLNKRDML (65 aa).

The protein belongs to the disease resistance NB-LRR family.

It is found in the cytoplasm. The protein resides in the membrane. Confers resistance to late blight (Phytophthora infestans) races carrying the avirulence gene Avr1. Resistance proteins guard the plant against pathogens that contain an appropriate avirulence protein via an indirect interaction with this avirulence protein. That triggers a defense system including the hypersensitive response, which restricts the pathogen growth. This is Putative late blight resistance protein homolog R1B-11 (R1B-11) from Solanum demissum (Wild potato).